The following is a 432-amino-acid chain: MTTEIMQISLSHNPADARWGEKALISTNDQGVTIHLTSHDQLGGIQRAARKIDGQGIKQVKLAGEGWGLEQSWAFWQGFRGPKGQRSVVWAELPANEKTELEQRLQIIDWVRDTINAPAEDLGPEQLAKNAIDLLCAVSCDAVSYRITKGEDLREQNYAGIYTVGRGSDRAPVLLALDYNPTGNPDAPVMACLVGKGITFDSGGYSLKQSAFMDSMKSDMGGAATLTGALALAAARGLKERVKLYLCCADNMVSGNAFKLGDIIRYRNGKTVEIMNTDAEGRLVLADGLIDASEQNAPLIIDAATLTGAAKTALGNDYHALFSFDDELAQALLTSAHSEHELFWRLPLAEFHRSQLPSNFAELNNVAGGAYSAGASTAAAFLSHFVKNYQQGWLHIDCSATYRKSAVDQWSAGATGLGVRTVANLLLAQAKQ.

Positions 196 and 201 each coordinate Mn(2+). Lys208 is an active-site residue. Residues Asp219, Asp278, and Glu280 each coordinate Mn(2+). Arg282 is an active-site residue.

It belongs to the peptidase M17 family. Homohexamer. Requires Mn(2+) as cofactor.

The protein localises to the cytoplasm. It carries out the reaction Release of an N-terminal amino acid, Xaa, from a peptide or arylamide. Xaa is preferably Glu or Asp but may be other amino acids, including Leu, Met, His, Cys and Gln.. Functionally, probably plays an important role in intracellular peptide degradation. The chain is Peptidase B from Yersinia pseudotuberculosis serotype O:1b (strain IP 31758).